A 228-amino-acid polypeptide reads, in one-letter code: Probable transcriptional regulatory protein SilR (228 aa).

A Response regulatory domain is found at 2–116 (KILIVEDDIK…ELLARVRTLL (115 aa)). Residue aspartate 51 is modified to 4-aspartylphosphate. A DNA-binding region (ompR/PhoB-type) is located at residues 125–225 (ESQLKVADLS…VRGVGYMLEI (101 aa)).

Phosphorylated by SilS.

It is found in the cytoplasm. In terms of biological role, component of the sil cation-efflux system that confers resistance to silver. Probable member of a two-component regulatory system SilS/SilR. This is Probable transcriptional regulatory protein SilR (silR) from Salmonella typhimurium.